The sequence spans 367 residues: Outer membrane porin C (367 aa).

An N-terminal signal peptide occupies residues 1–21 (MKVKVLSLLVPALLVAGAANA).

Belongs to the Gram-negative porin family. As to quaternary structure, homotrimer.

It is found in the cell outer membrane. Functionally, forms pores that allow passive diffusion of small molecules across the outer membrane. In Escherichia coli O157:H7, this protein is Outer membrane porin C (ompC).